The sequence spans 428 residues: Histidine--tRNA ligase (428 aa).

The protein belongs to the class-II aminoacyl-tRNA synthetase family. As to quaternary structure, homodimer.

It is found in the cytoplasm. It catalyses the reaction tRNA(His) + L-histidine + ATP = L-histidyl-tRNA(His) + AMP + diphosphate + H(+). This Buchnera aphidicola subsp. Schizaphis graminum (strain Sg) protein is Histidine--tRNA ligase.